A 201-amino-acid polypeptide reads, in one-letter code: Small ribosomal subunit protein uS4c (201 aa).

The region spanning 89 to 151 (MRLDNILFRL…QKSKTLIQNY (63 aa)) is the S4 RNA-binding domain.

The protein belongs to the universal ribosomal protein uS4 family. In terms of assembly, part of the 30S ribosomal subunit. Contacts protein S5. The interaction surface between S4 and S5 is involved in control of translational fidelity.

The protein localises to the plastid. It localises to the chloroplast. One of the primary rRNA binding proteins, it binds directly to 16S rRNA where it nucleates assembly of the body of the 30S subunit. Functionally, with S5 and S12 plays an important role in translational accuracy. This Phaseolus vulgaris (Kidney bean) protein is Small ribosomal subunit protein uS4c (rps4).